We begin with the raw amino-acid sequence, 618 residues long: Crinkler effector protein 16 (618 aa).

Positions 1-19 are cleaved as a signal peptide; the sequence is MVVVSLQCAIVGQAGSSFD. Residues 18-57 are LQLFLAK domain; that stretch reads FDVEIDDGAKVSKLKDAIKAKKPNDFKVVDADKLHLFLAK. The tract at residues 58–139 is DWL domain; it reads QPVEDESGKE…NMELPSSEQI (82 aa). The HVLVXXP motif signature appears at 140–146; that stretch reads HVLVVVP. Residue asparagine 534 is glycosylated (N-linked (GlcNAc...) asparagine).

The protein belongs to the Crinkler effector family.

The protein resides in the secreted. Its subcellular location is the host nucleus. Functionally, secreted effector that elicits necrosis in host plants, a characteristic of plant innate immunity. In Phytophthora infestans (Potato late blight agent), this protein is Crinkler effector protein 16.